We begin with the raw amino-acid sequence, 205 residues long: MDDKQYKGTTTVGIICNNGLVLATERRATMGNLIASRDAQKIYQLTDNIAMTIAGSVGDGQRLARMLQAESKLFELRRHGPMSINALSMLLSNLLWEYRIFYIQVLVGGVDKSGPKLFSLDPAGGRITEVKFSSTGSGSPLAYGVLEDRYKQDMSVEQGVELAAKALESAMKRDSASGNGMQFCVITPGKVEIFEREVGKQVCNS.

The propeptide at 1–8 is removed in mature form; by autocatalysis; that stretch reads MDDKQYKG. The active-site Nucleophile is the Thr-9.

The protein belongs to the peptidase T1B family. As to quaternary structure, the 20S proteasome core is composed of 14 alpha and 14 beta subunits that assemble into four stacked heptameric rings, resulting in a barrel-shaped structure. The two inner rings, each composed of seven catalytic beta subunits, are sandwiched by two outer rings, each composed of seven alpha subunits. The catalytic chamber with the active sites is on the inside of the barrel. Has a gated structure, the ends of the cylinder being occluded by the N-termini of the alpha-subunits. Is capped at one or both ends by the proteasome regulatory ATPase, PAN.

Its subcellular location is the cytoplasm. It catalyses the reaction Cleavage of peptide bonds with very broad specificity.. With respect to regulation, the formation of the proteasomal ATPase PAN-20S proteasome complex, via the docking of the C-termini of PAN into the intersubunit pockets in the alpha-rings, triggers opening of the gate for substrate entry. Interconversion between the open-gate and close-gate conformations leads to a dynamic regulation of the 20S proteasome proteolysis activity. Component of the proteasome core, a large protease complex with broad specificity involved in protein degradation. This Methanocella paludicola (strain DSM 17711 / JCM 13418 / NBRC 101707 / SANAE) protein is Proteasome subunit beta.